The following is a 148-amino-acid chain: D-aminoacyl-tRNA deacylase (148 aa).

Residues 137–138 (GP) carry the Gly-cisPro motif, important for rejection of L-amino acids motif.

Belongs to the DTD family. Homodimer.

It is found in the cytoplasm. The enzyme catalyses glycyl-tRNA(Ala) + H2O = tRNA(Ala) + glycine + H(+). It carries out the reaction a D-aminoacyl-tRNA + H2O = a tRNA + a D-alpha-amino acid + H(+). In terms of biological role, an aminoacyl-tRNA editing enzyme that deacylates mischarged D-aminoacyl-tRNAs. Also deacylates mischarged glycyl-tRNA(Ala), protecting cells against glycine mischarging by AlaRS. Acts via tRNA-based rather than protein-based catalysis; rejects L-amino acids rather than detecting D-amino acids in the active site. By recycling D-aminoacyl-tRNA to D-amino acids and free tRNA molecules, this enzyme counteracts the toxicity associated with the formation of D-aminoacyl-tRNA entities in vivo and helps enforce protein L-homochirality. This is D-aminoacyl-tRNA deacylase from Latilactobacillus sakei subsp. sakei (strain 23K) (Lactobacillus sakei subsp. sakei).